The primary structure comprises 301 residues: Phosducin-like protein (301 aa).

The residue at position 2 (Thr2) is an N-acetylthreonine. The interval 17 to 60 (YSTSEDEDSDHEDKDRGRGAPAISSTPAEAELAGEGISINTGPK) is disordered. Phosphoserine occurs at positions 20, 25, 226, 293, and 296. In terms of domain architecture, Phosducin spans 36-299 (APAISSTPAE…TCHSEDSDLE (264 aa)). Residues 158–301 (FKQVFEIPSG…HSEDSDLEID (144 aa)) form a thioredoxin fold region.

This sequence belongs to the phosducin family. In terms of assembly, forms a complex with the beta and gamma subunits of the GTP-binding protein, transducin. Interacts with the CCT chaperonin complex.

The protein localises to the cell projection. Its subcellular location is the cilium. In terms of biological role, functions as a co-chaperone for CCT in the assembly of heterotrimeric G protein complexes, facilitates the assembly of both Gbeta-Ggamma and RGS-Gbeta5 heterodimers. Also acts as a positive regulator of hedgehog signaling and regulates ciliary function. The chain is Phosducin-like protein (Pdcl) from Mus musculus (Mouse).